A 374-amino-acid chain; its full sequence is MADYWKSQPKKFCDYCKCWIADNRPSVEFHERGKNHKENVARKISEIKQKSLDKAKEEEKASKEFAAMEAAALKAYQEDLKRLGLQSDISEPTISPVTNTVQPTPTANQQKEKKKKKKKKEASKGRWVEGVTADGHCYYYDLVTGASQWEKPEGFQGNLKKTAAKAIWVEGLSEDGYTYYYNTETGESKWEKPDDFIPHGGDVLSSKDSEKLPDTLEDSKSSDSHSDSDDEQKKAGEASAETKKLIIKFKEKNKSTEKRIGPEIQKEKTTPKQNPSNTNEEKPKTPKKSTNPYGEWQEIKQEAESQEEVDLELPSTENECLSSSEAGAGEIKVVFKEKTVSSLGVAADGVAPVFKKRRIENGKSRNLRQRGEDE.

The segment at 11–42 (KFCDYCKCWIADNRPSVEFHERGKNHKENVAR) adopts a Matrin-type zinc-finger fold. Polar residues predominate over residues 91 to 109 (EPTISPVTNTVQPTPTANQ). Disordered regions lie at residues 91–126 (EPTI…SKGR) and 188–328 (SKWE…EAGA). Basic residues predominate over residues 112–121 (EKKKKKKKKE). WW domains follow at residues 121 to 154 (EASK…KPEG) and 162 to 195 (TAAK…KPDD). 2 stretches are compositionally biased toward basic and acidic residues: residues 188-197 (SKWEKPDDFI) and 205-270 (SSKD…EKTT). Phosphoserine occurs at positions 219, 226, and 228. The segment covering 315–325 (STENECLSSSE) has biased composition (polar residues). Residues 355–373 (KKRRIENGKSRNLRQRGED) are interaction with SNRNP200.

In terms of assembly, component of the spliceosome B complex. Associated with U2 snRNPs. Binds splicing factors SNRPB, SNRPC and SF1. Interacts via the WW domains with the Pro-rich domains of KHDRBS1/SAM68. Interacts via the WW domains with the Pro-rich domains of WBP11. Interacts with SNRNP200.

It localises to the nucleus. The protein resides in the nucleus speckle. Functionally, involved in pre-mRNA splicing as a component of the spliceosome. May play a role in cross-intron bridging of U1 and U2 snRNPs in the mammalian A complex. This chain is WW domain-binding protein 4 (Wbp4), found in Rattus norvegicus (Rat).